Consider the following 414-residue polypeptide: Poly(3-hydroxyalkanoate) depolymerase C (414 aa).

An N-terminal signal peptide occupies residues 1–37 (MLAKQIKKANSRSTLLRKSLLFAAPIILAVSSSSVYA). Residue Ser-154 is the Charge relay system of the active site.

The protein belongs to the AB hydrolase superfamily. Lipase family.

The protein localises to the secreted. Its function is as follows. Specific for poly(hydroxyalkanoic acid) consisting of monomers of four or five carbon atoms and for P-nitrophenylbutyrate as substrates. The chain is Poly(3-hydroxyalkanoate) depolymerase C (phaZ1) from Paucimonas lemoignei (Pseudomonas lemoignei).